The chain runs to 861 residues: Translation initiation factor IF-2 (861 aa).

The interval 107 to 272 (AQKQQDIQRA…QRKKKSKVVQ (166 aa)) is disordered. Over residues 115-128 (RAAEEAAAKERETE) the composition is skewed to basic and acidic residues. Polar residues-rich tracts occupy residues 148 to 158 (SVQQEAANMDT) and 169 to 180 (VDESVSATTAGG). Residues 210 to 228 (NKEDSEVRREPADAEDLKR) show a composition bias toward basic and acidic residues. The segment covering 260–269 (RARQRKKKSK) has biased composition (basic residues). The region spanning 362-531 (SRAPVVSVMG…LLQSEMLELT (170 aa)) is the tr-type G domain. A G1 region spans residues 371–378 (GHVDHGKT). Residue 371–378 (GHVDHGKT) participates in GTP binding. Positions 396 to 400 (GITQH) are G2. The tract at residues 417–420 (DTPG) is G3. GTP-binding positions include 417–421 (DTPGH) and 471–474 (NKMD). Residues 471–474 (NKMD) form a G4 region. Residues 507-509 (SAH) form a G5 region.

This sequence belongs to the TRAFAC class translation factor GTPase superfamily. Classic translation factor GTPase family. IF-2 subfamily.

Its subcellular location is the cytoplasm. One of the essential components for the initiation of protein synthesis. Protects formylmethionyl-tRNA from spontaneous hydrolysis and promotes its binding to the 30S ribosomal subunits. Also involved in the hydrolysis of GTP during the formation of the 70S ribosomal complex. The polypeptide is Translation initiation factor IF-2 (Hahella chejuensis (strain KCTC 2396)).